The sequence spans 473 residues: Photosystem II CP43 reaction center protein (473 aa).

A propeptide spanning residues 1–14 (MKNLYSLRRFYHVE) is cleaved from the precursor. Thr-15 is modified (N-acetylthreonine). Phosphothreonine is present on Thr-15. 5 consecutive transmembrane segments (helical) span residues 69-93 (LFEV…PHLA), 134-155 (LVGP…KDKN), 178-200 (KAMY…RIIS), 255-275 (KPWA…LSYS), and 291-312 (WFNT…ASQS). Glu-367 contributes to the [CaMn4O5] cluster binding site. The helical transmembrane segment at 447-471 (RARAAAAGFEKGIDRDNEPVLSMRP) threads the bilayer.

Belongs to the PsbB/PsbC family. PsbC subfamily. PSII is composed of 1 copy each of membrane proteins PsbA, PsbB, PsbC, PsbD, PsbE, PsbF, PsbH, PsbI, PsbJ, PsbK, PsbL, PsbM, PsbT, PsbX, PsbY, PsbZ, Psb30/Ycf12, at least 3 peripheral proteins of the oxygen-evolving complex and a large number of cofactors. It forms dimeric complexes. Binds multiple chlorophylls and provides some of the ligands for the Ca-4Mn-5O cluster of the oxygen-evolving complex. It may also provide a ligand for a Cl- that is required for oxygen evolution. PSII binds additional chlorophylls, carotenoids and specific lipids. is required as a cofactor.

It is found in the plastid. The protein localises to the chloroplast thylakoid membrane. Its function is as follows. One of the components of the core complex of photosystem II (PSII). It binds chlorophyll and helps catalyze the primary light-induced photochemical processes of PSII. PSII is a light-driven water:plastoquinone oxidoreductase, using light energy to abstract electrons from H(2)O, generating O(2) and a proton gradient subsequently used for ATP formation. This chain is Photosystem II CP43 reaction center protein, found in Chlorella vulgaris (Green alga).